Reading from the N-terminus, the 410-residue chain is Transcription factor SPN1 (410 aa).

The segment at 1–132 is disordered; the sequence is MSTADQEQPK…SRQELEEKLD (132 aa). Phosphothreonine is present on threonine 15. The segment covering 20 to 52 has biased composition (polar residues); that stretch reads TASSQKSTINAENENTKQNQSMEPQETSKGTSN. A Phosphoserine; by ATM or ATR modification is found at serine 23. Serine 40 is modified (phosphoserine). Residues 53 to 65 show a composition bias toward basic and acidic residues; it reads DTKDPDNGEKNEE. Residue serine 85 is modified to Phosphoserine. The residue at position 86 (threonine 86) is a Phosphothreonine. Serine 89 is modified (phosphoserine). The region spanning 219–296 is the TFIIS N-terminal domain; it reads QSVRIWLEPL…AEWTRPIIGA (78 aa). Residues 318 to 346 are disordered; the sequence is KSVMDSAKNRKKKSKSGEDPTSRGSSVQT.

It belongs to the IWS1 family. In terms of assembly, interacts with ABD1, RBP1, SPT5 and SPT6.

The protein localises to the nucleus. Transcription factor involved in RNA polymerase II transcription regulation. May function in both SPT15/TBP post-recruitment and recruitment steps of transcription. The protein is Transcription factor SPN1 (SPN1) of Saccharomyces cerevisiae (strain ATCC 204508 / S288c) (Baker's yeast).